Consider the following 318-residue polypeptide: MKPLNIIFAGTPDFAARHLQALINSHHNVIAVYTQPDRPAGRGKKLTASPVKELALSHSIPVYQPGSLRKEPAQQELASLNADIMVVVAYGLILPKVVLDTPRLGCINVHGSILPRWRGAAPIQRALWAGDKETGVTIMQMDVGLDTGDMLLKTYLPIEDDDTSASLYEKLALQGPDALLQALEGLANGTLAAEKQDETLANYAEKLSKEEARLDWTKSATQLWQEVRAFNPWPVSYFEHQGNTIKVWQTQVSTTSSTAAPGTIINASKKGIDVSTGDGVLTLLSMQLPGKKPLSVADILNARGEWFTPNTRLNNEAQ.

112–115 lines the (6S)-5,6,7,8-tetrahydrofolate pocket; that stretch reads SILP.

Belongs to the Fmt family.

It catalyses the reaction L-methionyl-tRNA(fMet) + (6R)-10-formyltetrahydrofolate = N-formyl-L-methionyl-tRNA(fMet) + (6S)-5,6,7,8-tetrahydrofolate + H(+). Attaches a formyl group to the free amino group of methionyl-tRNA(fMet). The formyl group appears to play a dual role in the initiator identity of N-formylmethionyl-tRNA by promoting its recognition by IF2 and preventing the misappropriation of this tRNA by the elongation apparatus. This Shewanella oneidensis (strain ATCC 700550 / JCM 31522 / CIP 106686 / LMG 19005 / NCIMB 14063 / MR-1) protein is Methionyl-tRNA formyltransferase.